Reading from the N-terminus, the 255-residue chain is High-affinity branched-chain amino acid transport ATP-binding protein LivG (255 aa).

Positions 6–254 (LSVNGLMMRF…PDVIRAYLGE (249 aa)) constitute an ABC transporter domain. Position 38 to 45 (38 to 45 (GPNGAGKT)) interacts with ATP.

It belongs to the ABC transporter superfamily.

Component of the leucine-specific transport system. This chain is High-affinity branched-chain amino acid transport ATP-binding protein LivG (livG), found in Escherichia coli O157:H7.